We begin with the raw amino-acid sequence, 616 residues long: Dihydroxy-acid dehydratase (616 aa).

Asp-81 contributes to the Mg(2+) binding site. [2Fe-2S] cluster is bound at residue Cys-122. Residues Asp-123 and Lys-124 each coordinate Mg(2+). Lys-124 is modified (N6-carboxylysine). Position 195 (Cys-195) interacts with [2Fe-2S] cluster. A Mg(2+)-binding site is contributed by Glu-491. Residue Ser-517 is the Proton acceptor of the active site.

The protein belongs to the IlvD/Edd family. In terms of assembly, homodimer. [2Fe-2S] cluster serves as cofactor. The cofactor is Mg(2+).

The enzyme catalyses (2R)-2,3-dihydroxy-3-methylbutanoate = 3-methyl-2-oxobutanoate + H2O. It carries out the reaction (2R,3R)-2,3-dihydroxy-3-methylpentanoate = (S)-3-methyl-2-oxopentanoate + H2O. It participates in amino-acid biosynthesis; L-isoleucine biosynthesis; L-isoleucine from 2-oxobutanoate: step 3/4. Its pathway is amino-acid biosynthesis; L-valine biosynthesis; L-valine from pyruvate: step 3/4. In terms of biological role, functions in the biosynthesis of branched-chain amino acids. Catalyzes the dehydration of (2R,3R)-2,3-dihydroxy-3-methylpentanoate (2,3-dihydroxy-3-methylvalerate) into 2-oxo-3-methylpentanoate (2-oxo-3-methylvalerate) and of (2R)-2,3-dihydroxy-3-methylbutanoate (2,3-dihydroxyisovalerate) into 2-oxo-3-methylbutanoate (2-oxoisovalerate), the penultimate precursor to L-isoleucine and L-valine, respectively. This Blochmanniella pennsylvanica (strain BPEN) protein is Dihydroxy-acid dehydratase.